A 239-amino-acid chain; its full sequence is Sugar fermentation stimulation protein homolog (239 aa).

Belongs to the SfsA family.

In Synechococcus sp. (strain JA-2-3B'a(2-13)) (Cyanobacteria bacterium Yellowstone B-Prime), this protein is Sugar fermentation stimulation protein homolog.